The following is a 274-amino-acid chain: Orotidine 5'-phosphate decarboxylase (274 aa).

A compositionally biased stretch (low complexity) spans 1–15 (MSAGRRSSGGRSAAA). Residues 1–21 (MSAGRRSSGGRSAAAPRFTPP) form a disordered region. Residues Asp32, Lys54, 99 to 108 (DLKLHDIPAT), Thr154, Arg215, Gln224, Gly244, and Arg245 each bind substrate. The active-site Proton donor is Lys101.

The protein belongs to the OMP decarboxylase family. Type 1 subfamily. As to quaternary structure, homodimer.

It catalyses the reaction orotidine 5'-phosphate + H(+) = UMP + CO2. It participates in pyrimidine metabolism; UMP biosynthesis via de novo pathway; UMP from orotate: step 2/2. In terms of biological role, catalyzes the decarboxylation of orotidine 5'-monophosphate (OMP) to uridine 5'-monophosphate (UMP). This Frankia casuarinae (strain DSM 45818 / CECT 9043 / HFP020203 / CcI3) protein is Orotidine 5'-phosphate decarboxylase.